The following is a 342-amino-acid chain: N-acetyl-gamma-glutamyl-phosphate reductase (342 aa).

Cys-149 is an active-site residue.

Belongs to the NAGSA dehydrogenase family. Type 1 subfamily.

It localises to the cytoplasm. The catalysed reaction is N-acetyl-L-glutamate 5-semialdehyde + phosphate + NADP(+) = N-acetyl-L-glutamyl 5-phosphate + NADPH + H(+). It participates in amino-acid biosynthesis; L-arginine biosynthesis; N(2)-acetyl-L-ornithine from L-glutamate: step 3/4. Catalyzes the NADPH-dependent reduction of N-acetyl-5-glutamyl phosphate to yield N-acetyl-L-glutamate 5-semialdehyde. The chain is N-acetyl-gamma-glutamyl-phosphate reductase from Cereibacter sphaeroides (strain KD131 / KCTC 12085) (Rhodobacter sphaeroides).